The following is a 453-amino-acid chain: UDP-glycosyltransferase 79B3 (453 aa).

Residues S266, 325–327 (VQQ), 342–350 (HCGFGSMWE), and 364–367 (LGDQ) each bind UDP-alpha-D-glucose.

It belongs to the UDP-glycosyltransferase family.

In Arabidopsis thaliana (Mouse-ear cress), this protein is UDP-glycosyltransferase 79B3 (UGT79B3).